A 371-amino-acid polypeptide reads, in one-letter code: MRSLPMLWFFFCVTVLIIGYFIYGKIIEKIFVINPKRQTPAYQVNDGVDYMPMSKTKIWLIQLLNIAGTGPIFGPILGALYGPVAMLWIVIGCIFAGAVHDYFCGMLSIRHGGATMPYLAGKFLGRPVKVFINTLALVLLLLVGVVFVASPAQLMGTITMDVFGVSQGALVLGDAEAVHHSVEAGGIKVWGMDKATVVAVWTAIIFAYYILATLLPVDKIIGRIYPLFGALLLFMSVGMVYGLVVSHFSATDPIEFFRTINADGEGLTWAKFTQNFQVKGDVPIWPLLFLTISCGALSGFHATQTPLMARCTENESEGRFIFYGAMITEGVIALVWCMVGLAFYENPQALQDAISAGCSMLKLCMIVRYIS.

Transmembrane regions (helical) follow at residues 4–24 (LPML…FIYG), 60–82 (LIQL…ALYG), 87–109 (LWIV…MLSI), 130–150 (VFIN…FVAS), 197–217 (VVAV…LLPV), 224–244 (IYPL…YGLV), 282–302 (VPIW…GFHA), and 320–340 (FIFY…CMVG).

This sequence belongs to the peptide transporter carbon starvation (CstA) (TC 2.A.114) family.

The protein localises to the cell membrane. This is an uncharacterized protein from Haemophilus influenzae (strain ATCC 51907 / DSM 11121 / KW20 / Rd).